A 210-amino-acid chain; its full sequence is Pre-mRNA-splicing factor 38 (210 aa).

The disordered stretch occupies residues 181–210; sequence PLSSSSDEEDDDEEQISKLESNEGAVDRNI. Basic and acidic residues predominate over residues 195–210; it reads QISKLESNEGAVDRNI.

This sequence belongs to the PRP38 family. Component of the 25S U4/U6.U5 tri-snRNP particle, a subcomplex of the spliceosome.

It localises to the nucleus. Functionally, required for pre-mRNA splicing and maintenance of stable U6 small nuclear RNA levels. Implicated in the formation of stable and biologically active snRNP structures. As part of the U4/U6.U5 tri-snRNP particle, dispensible for spliceosome assembly, but required for conformational changes, which result in U4 snRNA release and the subsequent catalytic activation of the spliceosome. In Schizosaccharomyces pombe (strain 972 / ATCC 24843) (Fission yeast), this protein is Pre-mRNA-splicing factor 38.